We begin with the raw amino-acid sequence, 287 residues long: Glutamate racemase (287 aa).

Over residues 1 to 15 the composition is skewed to polar residues; the sequence is MATKPQDANTTSREA. Residues 1–25 are disordered; sequence MATKPQDANTTSREAITSKADSPPR. Residues 32-33 and 64-65 each bind substrate; these read DS and YG. The active-site Proton donor/acceptor is cysteine 96. 97-98 provides a ligand contact to substrate; sequence NT. Residue cysteine 208 is the Proton donor/acceptor of the active site. Substrate is bound at residue 209–210; the sequence is TH.

It belongs to the aspartate/glutamate racemases family.

It catalyses the reaction L-glutamate = D-glutamate. It participates in cell wall biogenesis; peptidoglycan biosynthesis. Its function is as follows. Provides the (R)-glutamate required for cell wall biosynthesis. This Yersinia pseudotuberculosis serotype IB (strain PB1/+) protein is Glutamate racemase.